The sequence spans 807 residues: Mechanosensitive cation channel TMEM63A (807 aa).

Topologically, residues 1 to 51 (MTDSPFLELWQSRAVSVREQLGLGDRPNDSYCYNSAKNSTVLQGVTFGGIP) are extracellular. Asparagine 38 carries an N-linked (GlcNAc...) asparagine glycan. The chain crosses the membrane as a helical span at residues 52–74 (TVLLIDVSCFLFLILVFSIIRRR). The Cytoplasmic segment spans residues 75–134 (FWDYGRIALVSEADSEPRFQRLSSTSSSGQQDFENELGCCPWLTAIFRLHDDQILEWCGE). A helical transmembrane segment spans residues 135–167 (DAIHYLSFQRHIIFLLVVVSFLSLCVILPVNLS). Topologically, residues 168 to 191 (GDLLDKDPYSFGRTTIANLQTDND) are extracellular. Residues 192-217 (LLWLHTIFAVIYLFLTVGFMRHHTQS) form a helical membrane-spanning segment. Residues 218–416 (IKYKEENLVR…CWKNLSIQGL (199 aa)) lie on the Cytoplasmic side of the membrane. An intracellular linker IL2; confers mechanosensitivity region spans residues 219–414 (KYKEENLVRR…DICWKNLSIQ (196 aa)). Residues 417-444 (RWWLQWLGINFTLFLGLFFLTTPSIILS) form a helical membrane-spanning segment. Residues 445–462 (TMDKFNVTKPIHALNNPI) are Extracellular-facing. Asparagine 450 is a glycosylation site (N-linked (GlcNAc...) asparagine). Residues 463-490 (ISQFFPTLLLWSFSALLPSIVYYSTLLE) form a helical membrane-spanning segment. Residues 491–495 (SHWTK) are Cytoplasmic-facing. Residues 496–532 (SGENQIMMTKVYIFLIFMVLILPSLGLTSLDFFFRWL) traverse the membrane as a helical segment. Residues 533–554 (FDKTSSEASIRLECVFLPDQGA) are Extracellular-facing. A helical membrane pass occupies residues 555–586 (FFVNYVIASAFIGNGMELLRLPGLILYTFRMI). Residues 555 to 586 (FFVNYVIASAFIGNGMELLRLPGLILYTFRMI) are gating helix. Over 587–606 (MAKTAADRRNVKQNQAFQYE) the chain is Cytoplasmic. A helical membrane pass occupies residues 607–624 (FGAMYAWMLCVFTVIMAY). Residues 625–628 (SITC) are Extracellular-facing. A helical membrane pass occupies residues 629 to 651 (PIIAPFGLIYILLKHMVDRHNLY). Topologically, residues 652–661 (FIYLPAKLEK) are cytoplasmic. The helical transmembrane segment at 662 to 689 (GIHFAAVNQALAAPILCLFWLYFFSFLR) threads the bilayer. Residues 690–694 (LGMKA) are Extracellular-facing. A helical membrane pass occupies residues 695–709 (PATLFTFLVVLLTIL). Topologically, residues 710 to 807 (VCLAHTCFGY…GSVAAAPQEA (98 aa)) are cytoplasmic. Serine 739 bears the Phosphoserine mark.

This sequence belongs to the CSC1 (TC 1.A.17) family. As to quaternary structure, monomer. In terms of processing, N-Glycosylated.

The protein localises to the lysosome membrane. It is found in the early endosome membrane. The protein resides in the cell membrane. The enzyme catalyses Ca(2+)(in) = Ca(2+)(out). In terms of biological role, mechanosensitive cation channel with low conductance and high activation threshold. In contrast to TMEM63B, does not show phospholipid scramblase activity. Acts as a regulator of lysosomal morphology by mediating lysosomal mechanosensitivity. Important for the baby's first breath and respiration throughout life. Upon lung inflation conducts cation currents in alveolar type 1 and 2 cells triggering lamellar body exocytosis and surfactant secretion into airspace. Also acts as an osmosensitive cation channel preferentially activated by hypotonic stress. This chain is Mechanosensitive cation channel TMEM63A (TMEM63A), found in Pongo abelii (Sumatran orangutan).